The primary structure comprises 78 residues: MASMIEVRDLLALQGRMEAKQLSLSLHTPQPLIDAMLERMEAMGRAQRIQEDADGCLTGSCKSCPEGKACLKEWWALR.

Cysteine 56, cysteine 61, cysteine 64, and cysteine 70 together coordinate iron-sulfur cluster.

The protein belongs to the FeoC family.

Functionally, may function as a transcriptional regulator that controls feoABC expression. The protein is Probable [Fe-S]-dependent transcriptional repressor of Enterobacter sp. (strain 638).